The sequence spans 335 residues: Biotin synthase (335 aa).

Positions 46 to 274 (YKVQLASLFS…KSKIRLSAGR (229 aa)) constitute a Radical SAM core domain. [4Fe-4S] cluster is bound by residues cysteine 61, cysteine 65, and cysteine 68. 4 residues coordinate [2Fe-2S] cluster: cysteine 105, cysteine 137, cysteine 197, and arginine 269.

It belongs to the radical SAM superfamily. Biotin synthase family. Homodimer. Requires [4Fe-4S] cluster as cofactor. [2Fe-2S] cluster is required as a cofactor.

The catalysed reaction is (4R,5S)-dethiobiotin + (sulfur carrier)-SH + 2 reduced [2Fe-2S]-[ferredoxin] + 2 S-adenosyl-L-methionine = (sulfur carrier)-H + biotin + 2 5'-deoxyadenosine + 2 L-methionine + 2 oxidized [2Fe-2S]-[ferredoxin]. It participates in cofactor biosynthesis; biotin biosynthesis; biotin from 7,8-diaminononanoate: step 2/2. In terms of biological role, catalyzes the conversion of dethiobiotin (DTB) to biotin by the insertion of a sulfur atom into dethiobiotin via a radical-based mechanism. In Prochlorococcus marinus (strain MIT 9515), this protein is Biotin synthase.